We begin with the raw amino-acid sequence, 1640 residues long: Clathrin heavy chain 2 (1640 aa).

An N-acetylalanine modification is found at A2. Positions 2-479 are globular terminal domain; it reads AQILPVRFQE…TDPMLALSVY (478 aa). WD40-like repeat stretches follow at residues 24-67, 68-107, 108-149, 150-195, 196-257, 258-301, and 302-330; these read NIGF…RPIS, AESAIMNPASKVIALKAGKTLQIFNIEMKSKMKAHTMAEE, VIFW…TSLV, GCQV…QPIE, GHAA…PEAQ, NDFP…ISAD, and TIFVTAPHKPTSGIIGVNKKGQVLSVCVE. S67 is modified (phosphoserine). The residue at position 184 (Y184) is a Phosphotyrosine. Position 394 is a phosphothreonine (T394). Residues 449–465 are binding site for the uncoating ATPase, involved in lattice disassembly; the sequence is EKWLKEDKLECSEELGD. The tract at residues 480 to 523 is flexible linker; the sequence is LRANVPSKVIQCFAETGQFQKIVLYAKKVGYTPDWIFLLRGVMK. The interval 524 to 634 is distal segment; that stretch reads ISPEQGLQFS…QALEHYTDLY (111 aa). A heavy chain arm region spans residues 524–1640; that stretch reads ISPEQGLQFS…PLVFDFDGHE (1117 aa). CHCR repeat units lie at residues 537–683, 686–828, 833–972, 979–1124, 1128–1269, 1274–1420, and 1423–1566; these read VQDE…QLCV, ASKY…SEEV, IMAV…QLID, LSET…VKEA, YIRG…FRFA, LHIV…LLIN, and LLVL…RECF. Y634 is modified (phosphotyrosine). Positions 639 to 1640 are proximal segment; that stretch reads AVVHTHLLNP…PLVFDFDGHE (1002 aa). K737 carries the N6-succinyllysine modification. K856 carries the N6-acetyllysine modification. At Y899 the chain carries Phosphotyrosine. At S1167 the chain carries Phosphoserine. Phosphotyrosine is present on Y1206. The involved in binding clathrin light chain stretch occupies residues 1213–1522; the sequence is AAKLLYSNVS…YLYKGNNWWA (310 aa). Residue S1229 is modified to Phosphoserine. An N6-acetyllysine; alternate modification is found at K1441. K1441 bears the N6-succinyllysine; alternate mark. 2 positions are modified to phosphotyrosine: Y1477 and Y1487. S1494 carries the phosphoserine modification. K1501 carries the N6-acetyllysine modification. A trimerization region spans residues 1551–1640; the sequence is QKLLQWFLEE…PLVFDFDGHE (90 aa).

This sequence belongs to the clathrin heavy chain family. In terms of assembly, clathrin triskelions, composed of 3 heavy chains and 3 light chains, are the basic subunits of the clathrin coat. In the presence of light chains, hub assembly is influenced by both the pH and the concentration of calcium. May interact with OCRL. Interacts with AFTPH/aftiphilin. As to expression, maximal levels in skeletal muscle. High levels in heart and testis. Low expression detected in all other tissues.

The protein resides in the cytoplasmic vesicle membrane. It is found in the membrane. Its subcellular location is the coated pit. Clathrin is the major protein of the polyhedral coat of coated pits and vesicles. Two different adapter protein complexes link the clathrin lattice either to the plasma membrane or to the trans-Golgi network. The protein is Clathrin heavy chain 2 (CLTCL1) of Homo sapiens (Human).